A 312-amino-acid chain; its full sequence is Acetyl-coenzyme A carboxylase carboxyl transferase subunit alpha (312 aa).

The CoA carboxyltransferase C-terminal domain maps to 36–286 (NLEKEISKTY…ADYVKKSLNE (251 aa)).

Belongs to the AccA family. As to quaternary structure, acetyl-CoA carboxylase is a heterohexamer composed of biotin carboxyl carrier protein (AccB), biotin carboxylase (AccC) and two subunits each of ACCase subunit alpha (AccA) and ACCase subunit beta (AccD).

The protein resides in the cytoplasm. It catalyses the reaction N(6)-carboxybiotinyl-L-lysyl-[protein] + acetyl-CoA = N(6)-biotinyl-L-lysyl-[protein] + malonyl-CoA. Its pathway is lipid metabolism; malonyl-CoA biosynthesis; malonyl-CoA from acetyl-CoA: step 1/1. Functionally, component of the acetyl coenzyme A carboxylase (ACC) complex. First, biotin carboxylase catalyzes the carboxylation of biotin on its carrier protein (BCCP) and then the CO(2) group is transferred by the carboxyltransferase to acetyl-CoA to form malonyl-CoA. This chain is Acetyl-coenzyme A carboxylase carboxyl transferase subunit alpha, found in Campylobacter jejuni subsp. jejuni serotype O:6 (strain 81116 / NCTC 11828).